Reading from the N-terminus, the 738-residue chain is NAD(P)H-quinone oxidoreductase subunit 5, chloroplastic (738 aa).

The next 17 membrane-spanning stretches (helical) occupy residues 9-29 (WVIP…LFLI), 39-59 (IWAF…LHLS), 89-109 (VDPL…LVLI), 125-145 (FVYI…SNLI), 147-167 (IYFF…FWFT), 185-205 (GDFG…SLEF), 219-239 (NGIN…GAVA), 258-278 (TPIS…FLLA), 280-300 (LLPL…IGTI), 327-347 (LGYM…FHLI), 354-374 (ALLF…VGYS), 396-416 (TTFL…CFWS), 425-445 (WLYS…TAFY), 542-562 (LFPL…GIHF), 610-630 (SLAI…YSFF), 691-711 (GVID…GEEI), and 717-737 (GRIS…LFFI).

Belongs to the complex I subunit 5 family. NDH is composed of at least 16 different subunits, 5 of which are encoded in the nucleus.

The protein resides in the plastid. The protein localises to the chloroplast thylakoid membrane. It carries out the reaction a plastoquinone + NADH + (n+1) H(+)(in) = a plastoquinol + NAD(+) + n H(+)(out). The enzyme catalyses a plastoquinone + NADPH + (n+1) H(+)(in) = a plastoquinol + NADP(+) + n H(+)(out). NDH shuttles electrons from NAD(P)H:plastoquinone, via FMN and iron-sulfur (Fe-S) centers, to quinones in the photosynthetic chain and possibly in a chloroplast respiratory chain. The immediate electron acceptor for the enzyme in this species is believed to be plastoquinone. Couples the redox reaction to proton translocation, and thus conserves the redox energy in a proton gradient. The sequence is that of NAD(P)H-quinone oxidoreductase subunit 5, chloroplastic (ndhF) from Zea mays (Maize).